Consider the following 156-residue polypeptide: Small ribosomal subunit protein uS7 (156 aa).

It belongs to the universal ribosomal protein uS7 family. Part of the 30S ribosomal subunit. Contacts proteins S9 and S11.

Functionally, one of the primary rRNA binding proteins, it binds directly to 16S rRNA where it nucleates assembly of the head domain of the 30S subunit. Is located at the subunit interface close to the decoding center, probably blocks exit of the E-site tRNA. This is Small ribosomal subunit protein uS7 from Dehalococcoides mccartyi (strain ATCC BAA-2266 / KCTC 15142 / 195) (Dehalococcoides ethenogenes (strain 195)).